A 151-amino-acid polypeptide reads, in one-letter code: Large-conductance mechanosensitive channel (151 aa).

Helical transmembrane passes span 12–32 (GNIV…ALVT) and 71–91 (VLLS…FLVV). The interval 122 to 151 (AQTNGDSPGRHGGRGTPSPTDGPRASTESQ) is disordered.

It belongs to the MscL family. In terms of assembly, homopentamer.

Its subcellular location is the cell membrane. In terms of biological role, channel that opens in response to stretch forces in the membrane lipid bilayer. May participate in the regulation of osmotic pressure changes within the cell. This chain is Large-conductance mechanosensitive channel, found in Mycobacterium tuberculosis (strain CDC 1551 / Oshkosh).